The primary structure comprises 136 residues: Histone H3.Y (136 aa).

The segment covering 1–16 (MARTKQTARKATAWQA) has biased composition (low complexity). Residues 1 to 43 (MARTKQTARKATAWQAPRKPLATKAAGKRAPPTGGIKKPHRYK) form a disordered region. Asymmetric dimethylarginine is present on arginine 3. Residue arginine 3 is modified to Citrulline; alternate. Residue threonine 4 is modified to Phosphothreonine. Lysine 5 is modified (allysine; alternate). Lysine 5 is modified (N6,N6,N6-trimethyllysine; alternate). Lysine 5 bears the N6,N6-dimethyllysine; alternate mark. Lysine 5 carries the post-translational modification N6-(2-hydroxyisobutyryl)lysine; alternate. Lysine 5 is modified (N6-(beta-hydroxybutyryl)lysine; alternate). Lysine 5 carries the N6-acetyllysine; alternate modification. An N6-crotonyllysine; alternate modification is found at lysine 5. Lysine 5 carries the N6-methyllysine; alternate modification. Glutamine 6 is modified (5-glutamyl dopamine; alternate). Glutamine 6 is modified (5-glutamyl serotonin; alternate). A Phosphothreonine modification is found at threonine 7. Arginine 9 carries the citrulline; alternate modification. Arginine 9 is modified (symmetric dimethylarginine). Lysine 10 carries the post-translational modification N6,N6,N6-trimethyllysine; alternate. Lysine 10 bears the N6,N6-dimethyllysine; alternate mark. Residue lysine 10 is modified to N6-(2-hydroxyisobutyryl)lysine; alternate. The residue at position 10 (lysine 10) is an N6-(beta-hydroxybutyryl)lysine; alternate. Residue lysine 10 is modified to N6-acetyllysine; alternate. Lysine 10 bears the N6-crotonyllysine; alternate mark. Lysine 10 carries the N6-methyllysine; alternate modification. At lysine 10 the chain carries N6-butyryllysine; alternate. Lysine 10 is modified (N6-lactoyllysine; alternate). Threonine 12 carries the phosphothreonine modification. Arginine 18 carries the post-translational modification Asymmetric dimethylarginine. Residue arginine 18 is modified to Citrulline; alternate. 4 positions are modified to N6-(2-hydroxyisobutyryl)lysine; alternate: lysine 19, lysine 24, lysine 28, and lysine 37. N6-(beta-hydroxybutyryl)lysine; alternate occurs at positions 19, 24, and 28. N6-acetyllysine; alternate is present on residues lysine 19, lysine 24, lysine 28, and lysine 37. An N6-crotonyllysine; alternate mark is found at lysine 19, lysine 24, and lysine 28. N6-methyllysine; alternate is present on residues lysine 19, lysine 24, lysine 28, and lysine 37. 2 positions are modified to N6-butyryllysine; alternate: lysine 19 and lysine 24. 3 positions are modified to N6-lactoyllysine; alternate: lysine 19, lysine 24, and lysine 28. N6-glutaryllysine; alternate is present on residues lysine 19, lysine 24, and lysine 28. Residues lysine 28 and lysine 37 each carry the N6,N6,N6-trimethyllysine; alternate modification. 2 positions are modified to N6,N6-dimethyllysine; alternate: lysine 28 and lysine 37. N6-methyllysine is present on lysine 38. At tyrosine 42 the chain carries Phosphotyrosine. An N6,N6,N6-trimethyllysine; alternate modification is found at lysine 57. N6-(2-hydroxyisobutyryl)lysine; alternate is present on lysine 57. Lysine 57 bears the N6-(beta-hydroxybutyryl)lysine; alternate mark. At lysine 57 the chain carries N6-acetyllysine; alternate. An N6-crotonyllysine; alternate modification is found at lysine 57. Lysine 57 bears the N6-lactoyllysine; alternate mark. Position 57 is an N6-glutaryllysine; alternate (lysine 57). An N6-methyllysine modification is found at lysine 57. The residue at position 57 (lysine 57) is an N6-succinyllysine; alternate. Residue serine 58 is modified to Phosphoserine. Lysine 65 carries the post-translational modification N6-(2-hydroxyisobutyryl)lysine; alternate. The residue at position 65 (lysine 65) is an N6-methyllysine; alternate. Phosphoserine is present on serine 87. Phosphothreonine is present on threonine 108.

This sequence belongs to the histone H3 family. The nucleosome is a histone octamer containing two molecules each of H2A, H2B, H3 and H4 assembled in one H3-H4 heterotetramer and two H2A-H2B heterodimers. The octamer wraps approximately 147 bp of DNA. Interacts with HIRA, a chaperone required for its incorporation into nucleosomes. Does not interact with DAXX chaperone. Post-translationally, acetylation is generally linked to gene activation. Acetylation on Lys-10 (H3K9ac) impairs methylation at Arg-9 (H3R8me2s). Acetylation on Lys-19 (H3K18ac) and Lys-24 (H3K24ac) favors methylation at Arg-18 (H3R17me). Citrullination at Arg-9 (H3R8ci) and/or Arg-18 (H3R17ci) impairs methylation and represses transcription. In terms of processing, asymmetric dimethylation at Arg-18 (H3R17me2a) is linked to gene activation. Symmetric dimethylation at Arg-9 (H3R8me2s) is linked to gene repression. Asymmetric dimethylation at Arg-3 (H3R2me2a) is linked to gene repression and is mutually exclusive with H3 Lys-5 methylation (H3K4me2 and H3K4me3). H3R2me2a is present at the 3' of genes regardless of their transcription state and is enriched on inactive promoters, while it is absent on active promoters. Post-translationally, methylation at Lys-5 (H3K4me) facilitates subsequent acetylation of H3 and H4. Methylation at Lys-10 (H3K9me) and Lys-28 (H3K27me), which are linked to gene repression, are underrepresented. Methylation at Lys-10 (H3K9me) is a specific target for HP1 proteins (CBX1, CBX3 and CBX5) and prevents subsequent acetylation of H3 and H4. Phosphorylation at Thr-7 (H3T6ph) is a specific tag for epigenetic transcriptional activation that prevents demethylation of Lys-5 (H3K4me) by LSD1/KDM1A. At centromeres, specifically phosphorylated at Thr-12 (H3T11ph) from prophase to early anaphase. Phosphorylation at Thr-12 (H3T11ph) is a specific tag for epigenetic transcriptional activation that promotes demethylation of Lys-10 (H3K9me). Phosphorylation at Tyr-42 (H3Y41ph) promotes exclusion of CBX5 (HP1 alpha) from chromatin. In terms of processing, lysine deamination at Lys-5 (H3K4all) to form allysine. Allysine formation only takes place on H3K4me3 and results in gene repression. Post-translationally, crotonylation (Kcr) is specifically present in male germ cells and marks testis-specific genes in post-meiotic cells, including X-linked genes that escape sex chromosome inactivation in haploid cells. Crotonylation marks active promoters and enhancers and confers resistance to transcriptional repressors. It is also associated with post-meiotically activated genes on autosomes. Butyrylation of histones marks active promoters and competes with histone acetylation. It is present during late spermatogenesis. As to expression, expressed at low level in some tissues, such as testis and brain.

It localises to the nucleus. The protein localises to the chromosome. Functionally, primate-specific variant histone H3, which constitutes a core component of nucleosomes. Histone H3.Y-containing nucleosomes accumulate around transcription start sites and have flexible DNA ends, suggesting that they form relaxed chromatin that allows transcription factor access. Histone H1 binds less efficiently to histone H3.Y-containing nucleosomes. Nucleosomes wrap and compact DNA into chromatin, limiting DNA accessibility to the cellular machineries which require DNA as a template. Histones thereby play a central role in transcription regulation, DNA repair, DNA replication and chromosomal stability. DNA accessibility is regulated via a complex set of post-translational modifications of histones, also called histone code, and nucleosome remodeling. The protein is Histone H3.Y of Homo sapiens (Human).